Consider the following 352-residue polypeptide: Dihydrorhizobitoxine desaturase (352 aa).

3 helical membrane-spanning segments follow: residues 53 to 73 (LATLCVSWWLYPLAVLLIGAY), 89 to 109 (LAKNTTWNYVLGILFAAYPLF), and 204 to 224 (IGILAGSYALGLLHIVILFWI).

Belongs to the fatty acid desaturase type 1 family.

Its subcellular location is the cell inner membrane. It catalyses the reaction dihydrorhizobitoxine + 2 reduced [2Fe-2S]-[ferredoxin] + O2 + 2 H(+) = rhizobitoxine + 2 oxidized [2Fe-2S]-[ferredoxin] + 2 H2O. Involved in the biosynthesis of the nodulation enhancer compound rhizobitoxine. Catalyzes the final step of the pathway, the introduction of a carbon double bond into the C3 position of dihydrorhizobitoxine to produce rhizobitoxine. In Bradyrhizobium elkanii, this protein is Dihydrorhizobitoxine desaturase.